The following is a 92-amino-acid chain: Cell division topological specificity factor (92 aa).

The protein belongs to the MinE family.

Prevents the cell division inhibition by proteins MinC and MinD at internal division sites while permitting inhibition at polar sites. This ensures cell division at the proper site by restricting the formation of a division septum at the midpoint of the long axis of the cell. The sequence is that of Cell division topological specificity factor from Gluconobacter oxydans (strain 621H) (Gluconobacter suboxydans).